Reading from the N-terminus, the 234-residue chain is Large ribosomal subunit protein uL1 (234 aa).

The protein belongs to the universal ribosomal protein uL1 family. Part of the 50S ribosomal subunit.

In terms of biological role, binds directly to 23S rRNA. The L1 stalk is quite mobile in the ribosome, and is involved in E site tRNA release. Its function is as follows. Protein L1 is also a translational repressor protein, it controls the translation of the L11 operon by binding to its mRNA. In Pectobacterium atrosepticum (strain SCRI 1043 / ATCC BAA-672) (Erwinia carotovora subsp. atroseptica), this protein is Large ribosomal subunit protein uL1.